We begin with the raw amino-acid sequence, 154 residues long: UPF0260 protein NTHI1811 (154 aa).

This sequence belongs to the UPF0260 family.

The polypeptide is UPF0260 protein NTHI1811 (Haemophilus influenzae (strain 86-028NP)).